Consider the following 228-residue polypeptide: Cytochrome c biogenesis ATP-binding export protein CcmA (228 aa).

The ABC transporter domain maps to 2–227 (LSIERLGVGR…LHLERSGAWL (226 aa)). 34–41 (GANGSGKT) lines the ATP pocket. The interval 106–126 (GAPDGTSSVPASGRSGVAAPP) is disordered.

Belongs to the ABC transporter superfamily. CcmA exporter (TC 3.A.1.107) family. As to quaternary structure, the complex is composed of two ATP-binding proteins (CcmA) and two transmembrane proteins (CcmB).

The protein resides in the cell inner membrane. It catalyses the reaction heme b(in) + ATP + H2O = heme b(out) + ADP + phosphate + H(+). Part of the ABC transporter complex CcmAB involved in the biogenesis of c-type cytochromes; once thought to export heme, this seems not to be the case, but its exact role is uncertain. Responsible for energy coupling to the transport system. The chain is Cytochrome c biogenesis ATP-binding export protein CcmA from Paraburkholderia xenovorans (strain LB400).